The following is a 406-amino-acid chain: CMP-sialic acid transporter 2 (406 aa).

Residues 1 to 41 (MKNGMAECSVCRSRLVSPSSKAISRAYDNYNYKIRVSSKQR) are Cytoplasmic-facing. Residues 42-62 (ALNVFLVVGDCMLVGLQPVLV) form a helical membrane-spanning segment. The Lumenal segment spans residues 63–75 (YMSKVDGKFNFSP). The chain crosses the membrane as a helical span at residues 76–96 (ISVNFLTEIAKVIFAMVMLLF). The Cytoplasmic segment spans residues 97–148 (QARHQKVGEKPLLSLSTFVQAARNNMLLAVPAGLYAINNYLKFTMQLYFNPA). Residues 149-169 (TVKMLSNLKVLVIAVLLKMIM) form a helical membrane-spanning segment. Residues 170 to 172 (KRR) lie on the Lumenal side of the membrane. Residues 173 to 193 (FSIIQWEALALLLIGISINQL) form a helical membrane-spanning segment. The Cytoplasmic segment spans residues 194 to 201 (RSLPEGAT). The chain crosses the membrane as a helical span at residues 202–222 (TVAVPIATGAYICTFIFVTVP). Residues 223–245 (SLASVYNEYALKSQYDTSIYLQN) are Lumenal-facing. A helical membrane pass occupies residues 246–266 (LFLYGYGAIFNFLGILGTVIY). At 267–282 (KGPGSFDILQGHSRAT) the chain is on the cytoplasmic side. The chain crosses the membrane as a helical span at residues 283 to 303 (MFLILNNAAQGILSSFFFKYA). Over 304-323 (DTILKKYSSTVATIFTGIAS) the chain is Lumenal. The helical transmembrane segment at 324-344 (AALFGHILTMNFLLGISIVFI) threads the bilayer. The Cytoplasmic portion of the chain corresponds to 345–406 (SMHQFFSPLS…SDDRVPLLPR (62 aa)).

This sequence belongs to the nucleotide-sugar transporter family. CMP-Sialate:CMP antiporter (TC 2.A.7.12) subfamily.

The protein localises to the golgi apparatus membrane. Functionally, sugar transporter involved in the transport of CMP-sialic acid from the cytoplasm into the Golgi. This chain is CMP-sialic acid transporter 2, found in Arabidopsis thaliana (Mouse-ear cress).